Here is a 267-residue protein sequence, read N- to C-terminus: Kit ligand (267 aa).

An N-terminal signal peptide occupies residues 1–25 (MKKTQTWIITCIYLQLLLFNPLVHT). Q26 bears the Pyrrolidone carboxylic acid mark. Residues 26 to 215 (QGICRNRVTD…SNSIEDSSLQ (190 aa)) lie on the Extracellular side of the membrane. Cystine bridges form between C29–C114 and C68–C164. Residues N90, N97, N145, and N196 are each glycosylated (N-linked (GlcNAc...) asparagine). The chain crosses the membrane as a helical span at residues 216–238 (WAAVALPAFFSLVIGFAFGALYW). The Cytoplasmic portion of the chain corresponds to 239–267 (KKKQPNLTRTVENRQINEEDNEISMLQEK).

Belongs to the SCF family. Homodimer, non-covalently linked. Heterotetramer with KIT, binding two KIT molecules; thereby mediates KIT dimerization and subsequent activation by autophosphorylation. In terms of processing, a soluble form is produced by proteolytic processing of the extracellular domain.

Its subcellular location is the cytoplasm. It is found in the cytoskeleton. The protein localises to the cell membrane. It localises to the cell projection. The protein resides in the lamellipodium. Its subcellular location is the filopodium. It is found in the secreted. Ligand for the receptor-type protein-tyrosine kinase KIT. Plays an essential role in the regulation of cell survival and proliferation, hematopoiesis, stem cell maintenance, gametogenesis, mast cell development, migration and function, and in melanogenesis. KITLG/SCF binding can activate several signaling pathways. Promotes phosphorylation of PIK3R1, the regulatory subunit of phosphatidylinositol 3-kinase, and subsequent activation of the kinase AKT1. KITLG/SCF and KIT also transmit signals via GRB2 and activation of RAS, RAF1 and the MAP kinases MAPK1/ERK2 and/or MAPK3/ERK1. KITLG/SCF and KIT promote activation of STAT family members STAT1, STAT3 and STAT5. KITLG/SCF and KIT promote activation of PLCG1, leading to the production of the cellular signaling molecules diacylglycerol and inositol 1,4,5-trisphosphate. KITLG/SCF acts synergistically with other cytokines, probably interleukins. The chain is Kit ligand (KITLG) from Ovis aries (Sheep).